The primary structure comprises 364 residues: D-alanine--D-alanine ligase (364 aa).

Residues 146-352 (KLCAMNAGIA…FAELVEKLLL (207 aa)) enclose the ATP-grasp domain. Residue 179 to 234 (TKRFDWPLFVKPASLGSSVGISKVRNAEELAAALENACGLDSKALVEAAISGREIE) coordinates ATP. Mg(2+) is bound by residues aspartate 305, glutamate 319, and asparagine 321.

The protein belongs to the D-alanine--D-alanine ligase family. Mg(2+) serves as cofactor. It depends on Mn(2+) as a cofactor.

The protein localises to the cytoplasm. The enzyme catalyses 2 D-alanine + ATP = D-alanyl-D-alanine + ADP + phosphate + H(+). It functions in the pathway cell wall biogenesis; peptidoglycan biosynthesis. Cell wall formation. In Chlorobaculum tepidum (strain ATCC 49652 / DSM 12025 / NBRC 103806 / TLS) (Chlorobium tepidum), this protein is D-alanine--D-alanine ligase.